A 481-amino-acid polypeptide reads, in one-letter code: 2-succinylbenzoate--CoA ligase (481 aa).

It belongs to the ATP-dependent AMP-binding enzyme family. MenE subfamily.

The catalysed reaction is 2-succinylbenzoate + ATP + CoA = 2-succinylbenzoyl-CoA + AMP + diphosphate. The protein operates within quinol/quinone metabolism; 1,4-dihydroxy-2-naphthoate biosynthesis; 1,4-dihydroxy-2-naphthoate from chorismate: step 5/7. It functions in the pathway quinol/quinone metabolism; menaquinone biosynthesis. In terms of biological role, converts 2-succinylbenzoate (OSB) to 2-succinylbenzoyl-CoA (OSB-CoA). This Bacillus cereus (strain Q1) protein is 2-succinylbenzoate--CoA ligase.